A 192-amino-acid chain; its full sequence is NADH-quinone oxidoreductase subunit B (192 aa).

4 residues coordinate [4Fe-4S] cluster: cysteine 71, cysteine 72, cysteine 136, and cysteine 166.

The protein belongs to the complex I 20 kDa subunit family. NDH-1 is composed of 14 different subunits. Subunits NuoB, C, D, E, F, and G constitute the peripheral sector of the complex. The cofactor is [4Fe-4S] cluster.

It is found in the cell inner membrane. The enzyme catalyses a quinone + NADH + 5 H(+)(in) = a quinol + NAD(+) + 4 H(+)(out). Functionally, NDH-1 shuttles electrons from NADH, via FMN and iron-sulfur (Fe-S) centers, to quinones in the respiratory chain. The immediate electron acceptor for the enzyme in this species is believed to be ubiquinone. Couples the redox reaction to proton translocation (for every two electrons transferred, four hydrogen ions are translocated across the cytoplasmic membrane), and thus conserves the redox energy in a proton gradient. The sequence is that of NADH-quinone oxidoreductase subunit B from Sinorhizobium medicae (strain WSM419) (Ensifer medicae).